The sequence spans 117 residues: Small ribosomal subunit protein bS6 (117 aa).

This sequence belongs to the bacterial ribosomal protein bS6 family.

Its function is as follows. Binds together with bS18 to 16S ribosomal RNA. The chain is Small ribosomal subunit protein bS6 from Porphyromonas gingivalis (strain ATCC BAA-308 / W83).